Reading from the N-terminus, the 757-residue chain is RNA-directed RNA polymerase catalytic subunit (757 aa).

Positions 50–82 are disordered; the sequence is SEKGKWTTNTETGAPQLNPIDGPLPEDNEPSGY. Over residues 55 to 64 the composition is skewed to polar residues; it reads WTTNTETGAP. 2 short sequence motifs (nuclear localization signal) span residues 187 to 195 and 203 to 216; these read RKRRVRDNM and RTIGKKKQRVNKRS. Positions 249-256 are promoter-binding site; sequence RGFVYFVE. A RdRp catalytic domain is found at 286–483; the sequence is VRKMMTNSQD…GINMSKKKSY (198 aa).

This sequence belongs to the influenza viruses polymerase PB1 family. Influenza RNA polymerase is composed of three subunits: PB1, PB2 and PA. Interacts (via N-terminus) with PA (via C-terminus). Interacts (via C-terminus) with PB2 (via N-terminus); this interaction is essential for transcription initiation. Phosphorylated by host PRKCA.

The protein localises to the host nucleus. It localises to the host cytoplasm. The catalysed reaction is RNA(n) + a ribonucleoside 5'-triphosphate = RNA(n+1) + diphosphate. RNA-dependent RNA polymerase which is responsible for replication and transcription of virus RNA segments. The transcription of viral mRNAs occurs by a unique mechanism called cap-snatching. 5' methylated caps of cellular mRNAs are cleaved after 10-13 nucleotides by PA. In turn, these short capped RNAs are used as primers by PB1 for transcription of viral mRNAs. During virus replication, PB1 initiates RNA synthesis and copy vRNA into complementary RNA (cRNA) which in turn serves as a template for the production of more vRNAs. In Influenza A virus (strain A/Memphis/110/1976 H3N2), this protein is RNA-directed RNA polymerase catalytic subunit.